The chain runs to 104 residues: N(4)-acetylcytidine amidohydrolase (104 aa).

The region spanning 6 to 101 is the ASCH domain; it reads TFFERFEHDI…EQLYMIRFKV (96 aa). Residue lysine 20 is the Proton acceptor of the active site. Threonine 23 functions as the Nucleophile in the catalytic mechanism. Residue glutamate 73 is the Proton donor of the active site.

This sequence belongs to the N(4)-acetylcytidine amidohydrolase family.

It catalyses the reaction N(4)-acetylcytidine + H2O = cytidine + acetate + H(+). The enzyme catalyses N(4)-acetyl-2'-deoxycytidine + H2O = 2'-deoxycytidine + acetate + H(+). It carries out the reaction N(4)-acetylcytosine + H2O = cytosine + acetate + H(+). Catalyzes the hydrolysis of N(4)-acetylcytidine (ac4C). This is N(4)-acetylcytidine amidohydrolase from Shewanella oneidensis (strain ATCC 700550 / JCM 31522 / CIP 106686 / LMG 19005 / NCIMB 14063 / MR-1).